A 481-amino-acid chain; its full sequence is Subtilisin-like protease 1 (481 aa).

The N-terminal stretch at 1-19 (MGVFRFISISLAAVSAANA) is a signal peptide. Positions 20–116 (AQILSMPHAQ…VEPDTIISVH (97 aa)) are excised as a propeptide. The 82-residue stretch at 34 to 115 (SYIVMMKDDT…FVEPDTIISV (82 aa)) folds into the Inhibitor I9 domain. The region spanning 126-400 (SWGLARISSS…NVLINNGGAK (275 aa)) is the Peptidase S8 domain. Active-site charge relay system residues include aspartate 158 and histidine 190. The segment at 175–198 (GSNQVNDGDDNDRSGHGTHTSGTM) is disordered. Asparagine 251 is a glycosylation site (N-linked (GlcNAc...) asparagine). Residues 281 to 312 (GNDNTDARSSSPASEPSVCTVGASAEDDSRSS) form a disordered region. Polar residues predominate over residues 282–294 (NDNTDARSSSPAS). Serine 345 functions as the Charge relay system in the catalytic mechanism. The segment at 379–455 (ASISDVGPGT…HPHTPFPGGD (77 aa)) is disordered. Over residues 424-450 (PQQPAPGEPSTPAPAPMPPTPQHPHTP) the composition is skewed to pro residues.

The protein belongs to the peptidase S8 family.

Its subcellular location is the secreted. In terms of biological role, secreted subtilisin-like serine protease with keratinolytic activity that contributes to pathogenicity. This chain is Subtilisin-like protease 1 (SUB1), found in Arthroderma gypseum (strain ATCC MYA-4604 / CBS 118893) (Microsporum gypseum).